Consider the following 111-residue polypeptide: Disintegrin piscivostatin-alpha (111 aa).

Positions 1-20 (MIQVLLVTICLAVFPYQGSS) are cleaved as a signal peptide. Residues 21 to 44 (IILESGNVNDYEVVYPRKITPLPK) constitute a propeptide that is removed on maturation. A Disintegrin domain is found at 45–111 (GAVQPKNPCC…GDCPRKHFYA (67 aa)). 4 cysteine pairs are disulfide-bonded: C53/C76, C67/C73, C72/C97, and C85/C104. Residues 89–91 (RGD) carry the Cell attachment site motif. Positions 110–111 (YA) are excised as a propeptide.

The protein belongs to the disintegrin family. Dimeric disintegrin subfamily. As to quaternary structure, heterodimer with piscivostatin-beta; disulfide-linked. In terms of tissue distribution, expressed by the venom gland.

It is found in the secreted. Inhibits fibrinogen interaction with platelets. Acts by binding to alpha-IIb/beta-3 (ITGA2B/ITGB3) on the platelet surface and inhibits both ADP-induced platelet aggregation and platelet aggregate dissociation in human platelet-rich plasma. In Agkistrodon piscivorus piscivorus (Eastern cottonmouth), this protein is Disintegrin piscivostatin-alpha.